The chain runs to 880 residues: Alanine--tRNA ligase (880 aa).

The Zn(2+) site is built by H567, H571, C669, and H673.

The protein belongs to the class-II aminoacyl-tRNA synthetase family. The cofactor is Zn(2+).

The protein resides in the cytoplasm. It carries out the reaction tRNA(Ala) + L-alanine + ATP = L-alanyl-tRNA(Ala) + AMP + diphosphate. In terms of biological role, catalyzes the attachment of alanine to tRNA(Ala) in a two-step reaction: alanine is first activated by ATP to form Ala-AMP and then transferred to the acceptor end of tRNA(Ala). Also edits incorrectly charged Ser-tRNA(Ala) and Gly-tRNA(Ala) via its editing domain. In Bacillus cereus (strain ZK / E33L), this protein is Alanine--tRNA ligase.